The sequence spans 311 residues: Pyrimidine-specific ribonucleoside hydrolase RihA (311 aa).

The active site involves histidine 240.

This sequence belongs to the IUNH family. RihA subfamily.

Hydrolyzes cytidine or uridine to ribose and cytosine or uracil, respectively. The protein is Pyrimidine-specific ribonucleoside hydrolase RihA of Salmonella schwarzengrund (strain CVM19633).